The chain runs to 960 residues: MVSVKPLPDIDSNEGETDADVYEVEDILADRVNKNGINEYYIKWAGYDWYDNTWEPEQNLFGAEKVLKKWKKRKKLIAKGLLEPFDAEDNEAKKMKREKEILRQQRQKRKSELTQLSQKVKEKFKKMRKKPARRIVTIANDEEEEDDQTMDEDAFERKSMQGELKERNLTDKTSTLSTSFGETSPDVNPFYLSEWPTVTDSILLSKSLSSDAIPLKNGEIKSTMLMPSDSDNSVPGIQNSNNLENTGAFVENANSPQSNTPLSTFRHSSPLSLSPVITSDNDVANSLFFSNSTPLPSSLKIKKEAPKLETHTILVSDNSGSLTKQDILSYFAFIKGNIEVFFLKSPKKDKVCNMAYIQFDSIEQAKLAYDKGHPSWHVTLVKGKISTDMEECKVSKSILKTTPSKKANARSVSFTQTTTDTLSESEKFASNVDLDENFDFNVNVTNEDAKQLKKSVIGSSWTTVNNDWNSVSKSDQTFENDGASKVVPAGNITLNSDNSLHHSISESEDLSSASTLSDYFRFVLRVGKSLYYAGELSFDISKLKAETEHQQLLRSLVSCKQVDVLRFVTSQYLEVFGTCLTKVLSGSLCIRSDVDMTHFKNILNRGNGAGIVLGSNYTLLLFTEDNNALMNLYDCQGQSNSPFWMVIFEPLESILVEWSAKNLRPKKPYHKSQSYLSYLLQLGHIDLHKIGAFQATQILIVSKQPSPEAEELEDTFREAAIPTFRGLEIPESLFLSQNVFVFLNVSLEDDFDQLQFLTLAKRKSCKFFLFGLSLPLKSPNDSHVGTDFKKNNEPLDKLTYSQYLRPMFPKGGVVSVTLSALIKTPRLLELISPFLEIKKDSWILILPPSIVDMVKSYFVTNNPDKSLLEIQNLLNTLQRYLTNPALKNVTLYQDWDIVIDDSADVSLASTLQLYQKKNYDKYRRFVLIHELKNELTPVNGLDIVDYDEFKETFMRAIGLK.

The 53-residue stretch at 22–74 folds into the Chromo domain; it reads YEVEDILADRVNKNGINEYYIKWAGYDWYDNTWEPEQNLFGAEKVLKKWKKRK.

In terms of assembly, ago1, chp1 and tas3 interact to form the core of the RNA-induced transcriptional silencing (RITS) complex. The RITS complex interacts with the RDRC complex via interaction between ago1 and hrr1. Clr4 has a role in mediating this interaction. Interacts with dri1.

It localises to the nucleus. The protein resides in the cytoplasm. It is found in the cytoskeleton. The protein localises to the microtubule organizing center. Its subcellular location is the spindle pole body. Functionally, component of the kinetochore which plays a role in stabilizing microtubules and so allowing accurate chromosome segregation. Has a role in the RNA interference (RNAi) pathway which is important for heterochromatin formation and accurate chromosome segregation. A member of the RNA-induced transcriptional silencing (RITS) complex which is involved in the biosynthesis of dsRNA from primer siRNAs provided by the RNA-directed RNA polymerase (RDRC) complex. This is Chromo domain-containing protein 1 from Schizosaccharomyces pombe (strain 972 / ATCC 24843) (Fission yeast).